Consider the following 309-residue polypeptide: Porphobilinogen deaminase (309 aa).

At C241 the chain carries S-(dipyrrolylmethanemethyl)cysteine.

Belongs to the HMBS family. As to quaternary structure, monomer. Dipyrromethane serves as cofactor.

It carries out the reaction 4 porphobilinogen + H2O = hydroxymethylbilane + 4 NH4(+). Its pathway is porphyrin-containing compound metabolism; protoporphyrin-IX biosynthesis; coproporphyrinogen-III from 5-aminolevulinate: step 2/4. Tetrapolymerization of the monopyrrole PBG into the hydroxymethylbilane pre-uroporphyrinogen in several discrete steps. This chain is Porphobilinogen deaminase, found in Desulforamulus reducens (strain ATCC BAA-1160 / DSM 100696 / MI-1) (Desulfotomaculum reducens).